A 154-amino-acid chain; its full sequence is Ubiquitin-like protein 4A-A (154 aa).

Residues 1 to 76 form the Ubiquitin-like domain; the sequence is MILTVKPLQG…LNLVVRPAGE (76 aa).

In terms of assembly, component of the BAT3 complex.

It localises to the cytoplasm. Its subcellular location is the cytosol. Component of the BAT3 complex, a multiprotein complex involved in the post-translational delivery of tail-anchored (TA) membrane proteins to the endoplasmic reticulum membrane. TA membrane proteins, also named type II transmembrane proteins, contain a single C-terminal transmembrane region. In Salmo salar (Atlantic salmon), this protein is Ubiquitin-like protein 4A-A (ubl4aa).